The following is a 125-amino-acid chain: Alpha-endosulfine (125 aa).

Residues Met-1–Leu-37 show a composition bias toward basic and acidic residues. The segment at Met-1–Phe-53 is disordered. Thr-28 bears the Phosphothreonine; by CDK2 mark. Ser-67 carries the post-translational modification Phosphoserine; by GWL. The tract at residues Gln-81–Ser-108 is disordered. Thr-99 bears the Phosphothreonine; by CDK2 mark. Ser-109 carries the post-translational modification Phosphoserine; by PKA.

This sequence belongs to the endosulfine family. Phosphorylation at Ser-67 by gwl during mitosis is essential for interaction with ppp2r2d (PR55-delta) and subsequent inactivation of PP2A.

The protein localises to the cytoplasm. In terms of biological role, protein phosphatase inhibitor that specifically inhibits protein phosphatase 2A (PP2A) during mitosis. When phosphorylated at Ser-67 during mitosis, specifically interacts with ppp2r2d (PR55-delta) and inhibits its activity, leading to inactivation of PP2A, an essential condition to keep cyclin-B1-CDK1 activity high during M phase. The chain is Alpha-endosulfine (ensa) from Xenopus tropicalis (Western clawed frog).